Consider the following 142-residue polypeptide: Large ribosomal subunit protein uL11 (142 aa).

This sequence belongs to the universal ribosomal protein uL11 family. In terms of assembly, part of the ribosomal stalk of the 50S ribosomal subunit. Interacts with L10 and the large rRNA to form the base of the stalk. L10 forms an elongated spine to which L12 dimers bind in a sequential fashion forming a multimeric L10(L12)X complex. Post-translationally, one or more lysine residues are methylated.

Functionally, forms part of the ribosomal stalk which helps the ribosome interact with GTP-bound translation factors. This chain is Large ribosomal subunit protein uL11, found in Rhodospirillum rubrum (strain ATCC 11170 / ATH 1.1.1 / DSM 467 / LMG 4362 / NCIMB 8255 / S1).